The chain runs to 639 residues: Coiled-coil domain-containing protein 93 homolog (639 aa).

Residues 250–275 (KLESQLSGKDGSGKDTTEAEREEEEK) form a disordered region. A compositionally biased stretch (basic and acidic residues) spans 260-275 (GSGKDTTEAEREEEEK). Residues 332 to 492 (AEKLHRQKIT…KNRDISLIQR (161 aa)) are a coiled coil.

This sequence belongs to the CCDC93 family.

This chain is Coiled-coil domain-containing protein 93 homolog, found in Dictyostelium discoideum (Social amoeba).